Here is a 95-residue protein sequence, read N- to C-terminus: Co-chaperonin GroES (95 aa).

This sequence belongs to the GroES chaperonin family. As to quaternary structure, heptamer of 7 subunits arranged in a ring. Interacts with the chaperonin GroEL.

The protein resides in the cytoplasm. In terms of biological role, together with the chaperonin GroEL, plays an essential role in assisting protein folding. The GroEL-GroES system forms a nano-cage that allows encapsulation of the non-native substrate proteins and provides a physical environment optimized to promote and accelerate protein folding. GroES binds to the apical surface of the GroEL ring, thereby capping the opening of the GroEL channel. The polypeptide is Co-chaperonin GroES (Nitratidesulfovibrio vulgaris (strain DSM 19637 / Miyazaki F) (Desulfovibrio vulgaris)).